Here is a 122-residue protein sequence, read N- to C-terminus: Large ribosomal subunit protein uL14 (122 aa).

The protein belongs to the universal ribosomal protein uL14 family. As to quaternary structure, part of the 50S ribosomal subunit. Forms a cluster with proteins L3 and L19. In the 70S ribosome, L14 and L19 interact and together make contacts with the 16S rRNA in bridges B5 and B8.

Functionally, binds to 23S rRNA. Forms part of two intersubunit bridges in the 70S ribosome. This Thermotoga petrophila (strain ATCC BAA-488 / DSM 13995 / JCM 10881 / RKU-1) protein is Large ribosomal subunit protein uL14.